A 179-amino-acid polypeptide reads, in one-letter code: Large ribosomal subunit protein bL9 (179 aa).

The disordered stretch occupies residues 156 to 179; the sequence is PEGAPVPVAEEPAAEAEQAEVAAE. Positions 157–166 are enriched in low complexity; sequence EGAPVPVAEE. Positions 167–179 are enriched in acidic residues; it reads PAAEAEQAEVAAE.

This sequence belongs to the bacterial ribosomal protein bL9 family.

Functionally, binds to the 23S rRNA. This Porphyromonas gingivalis (strain ATCC 33277 / DSM 20709 / CIP 103683 / JCM 12257 / NCTC 11834 / 2561) protein is Large ribosomal subunit protein bL9.